A 180-amino-acid chain; its full sequence is UPF0340 protein LL0489 (180 aa).

It belongs to the UPF0340 family.

This Lactococcus lactis subsp. lactis (strain IL1403) (Streptococcus lactis) protein is UPF0340 protein LL0489 (yeiF).